A 121-amino-acid chain; its full sequence is Large ribosomal subunit protein bL19 (121 aa).

Belongs to the bacterial ribosomal protein bL19 family.

Its function is as follows. This protein is located at the 30S-50S ribosomal subunit interface and may play a role in the structure and function of the aminoacyl-tRNA binding site. This is Large ribosomal subunit protein bL19 from Bifidobacterium adolescentis (strain ATCC 15703 / DSM 20083 / NCTC 11814 / E194a).